The chain runs to 275 residues: Transcription regulator AOL_s00215g275 (275 aa).

2 disordered regions span residues 13–65 (TPLP…SSIG) and 84–108 (ILQQ…RQRL). The span at 14–26 (PLPSLNSSRSPQR) shows a compositional bias: polar residues. Over residues 27 to 40 (TPSLGSSSTSSLSP) the composition is skewed to low complexity. Over residues 47-60 (TPSTPESNDSGLTL) the composition is skewed to polar residues. Positions 88–106 (KSRHQNQPSRRHKQKNRRQ) are enriched in basic residues.

Functionally, regulatory protein; part of the gene cluster that mediates the biosynthesis of sesquiterpenyl epoxy-cyclohexenoids (SECs) such as anthrobotrisins and arthrosporols, metabolites that possess a novel hybrid carbon skeleton consisting of a polyketide-derived epoxycyclohexenol combined with a terpenoid-derived monocyclic sesquiterpenol substructure (PKS-PTS hybrid). The SEC pathway plays an important role for fungal soil colonization via decreasing fungal nematode-capturing ability. AOL_s00215g275 can perform multiple functions in fungal growth and development via regulating the SEC biosynthesis, TCA cycle, and septa formation. Also involved in inhibiting conidial formation, germination, and nematicidal activity but promotes trap production. Plays a role in fungal resistances and significantly regulates the fungal morphology and responses to chemical stressors such as cell-wall-perturbing agents (SDS and Congo red), osmotic agents (NaCl and sorbitol), or the oxidant H(2)O(2). The polypeptide is Transcription regulator AOL_s00215g275 (Arthrobotrys oligospora (strain ATCC 24927 / CBS 115.81 / DSM 1491) (Nematode-trapping fungus)).